The following is a 395-amino-acid chain: Imidazolonepropionase (395 aa).

2 residues coordinate Fe(3+): histidine 63 and histidine 65. 2 residues coordinate Zn(2+): histidine 63 and histidine 65. Residues arginine 72, tyrosine 135, and histidine 168 each contribute to the 4-imidazolone-5-propanoate site. Residue tyrosine 135 coordinates N-formimidoyl-L-glutamate. Histidine 233 lines the Fe(3+) pocket. Histidine 233 serves as a coordination point for Zn(2+). Glutamine 236 serves as a coordination point for 4-imidazolone-5-propanoate. Fe(3+) is bound at residue aspartate 308. Aspartate 308 serves as a coordination point for Zn(2+). 2 residues coordinate N-formimidoyl-L-glutamate: asparagine 310 and glycine 312. Threonine 313 lines the 4-imidazolone-5-propanoate pocket.

The protein belongs to the metallo-dependent hydrolases superfamily. HutI family. The cofactor is Zn(2+). Fe(3+) is required as a cofactor.

The protein resides in the cytoplasm. It catalyses the reaction 4-imidazolone-5-propanoate + H2O = N-formimidoyl-L-glutamate. The protein operates within amino-acid degradation; L-histidine degradation into L-glutamate; N-formimidoyl-L-glutamate from L-histidine: step 3/3. In terms of biological role, catalyzes the hydrolytic cleavage of the carbon-nitrogen bond in imidazolone-5-propanoate to yield N-formimidoyl-L-glutamate. It is the third step in the universal histidine degradation pathway. The polypeptide is Imidazolonepropionase (Cereibacter sphaeroides (strain KD131 / KCTC 12085) (Rhodobacter sphaeroides)).